A 244-amino-acid polypeptide reads, in one-letter code: Heat stress transcription factor B-3 (244 aa).

Residues 38–132 (PPPFLVKTYK…LMSNIRRRKS (95 aa)) mediate DNA binding. The interval 173 to 218 (TSSSFVYTALLDENKCLKNENELLSCELGKTKKKCKQLMELVERYR) is hydrophobic repeat HR-A/B. The short motif at 202-208 (KTKKKCK) is the Nuclear localization signal element. The tract at residues 216–244 (RYRGEDEDATDESDDEEDEGLKLFGVKLE) is disordered. The span at 220–234 (EDEDATDESDDEEDE) shows a compositional bias: acidic residues. Residues 236-243 (LKLFGVKL) carry the Nuclear export signal motif.

Belongs to the HSF family. Class B subfamily. As to quaternary structure, homotrimer. Exhibits temperature-dependent phosphorylation.

The protein resides in the cytoplasm. It localises to the nucleus. Functionally, transcriptional regulator that specifically binds DNA sequence 5'-AGAAnnTTCT-3' known as heat shock promoter elements (HSE). The sequence is that of Heat stress transcription factor B-3 (HSFB3) from Arabidopsis thaliana (Mouse-ear cress).